A 344-amino-acid chain; its full sequence is GDSL esterase/lipase At5g03590 (344 aa).

The signal sequence occupies residues 1 to 19 (MHYLMKLFFSLSLFFGING). Ser-41 functions as the Nucleophile in the catalytic mechanism. N-linked (GlcNAc...) asparagine glycans are attached at residues Asn-126, Asn-227, and Asn-238. Asp-318 is a catalytic residue.

The protein belongs to the 'GDSL' lipolytic enzyme family.

The protein resides in the secreted. This chain is GDSL esterase/lipase At5g03590, found in Arabidopsis thaliana (Mouse-ear cress).